Consider the following 647-residue polypeptide: Glutamyl-tRNA(Gln) amidotransferase subunit B, mitochondrial (647 aa).

The disordered stretch occupies residues 87–106 (QAKALKKSGHKKKKSSDNQT). The span at 90–100 (ALKKSGHKKKK) shows a compositional bias: basic residues.

It belongs to the GatB/GatE family. GatB subfamily. Subunit of the heterotrimeric GatCAB amidotransferase (AdT) complex, composed of A, B and C subunits.

The protein resides in the mitochondrion. It catalyses the reaction L-glutamyl-tRNA(Gln) + L-glutamine + ATP + H2O = L-glutaminyl-tRNA(Gln) + L-glutamate + ADP + phosphate + H(+). In terms of biological role, allows the formation of correctly charged Gln-tRNA(Gln) through the transamidation of misacylated Glu-tRNA(Gln) in the mitochondria. The reaction takes place in the presence of glutamine and ATP through an activated gamma-phospho-Glu-tRNA(Gln). In Neurospora crassa (strain ATCC 24698 / 74-OR23-1A / CBS 708.71 / DSM 1257 / FGSC 987), this protein is Glutamyl-tRNA(Gln) amidotransferase subunit B, mitochondrial.